Reading from the N-terminus, the 687-residue chain is T-box transcription factor TBX2b (687 aa).

The segment at residues 103–276 is a DNA-binding region (T-box); sequence LWDQFHKLGT…NNPFAKGFRD (174 aa). Disordered regions lie at residues 303-452 and 611-687; these read DRDG…ESPS and NLLT…DSPK. Composition is skewed to basic and acidic residues over residues 338 to 357, 375 to 400, and 408 to 430; these read GSRD…HQND, SRSE…RKTS, and NLEK…KDTE. Composition is skewed to polar residues over residues 431-451, 611-630, and 644-654; these read NSGI…TESP, NLLT…SSKC, and GASQRNGSPKT. Residues 654-681 are a coiled coil; that stretch reads TTMKESINELQNIQRLVSGLESQRETSS. The span at 675–687 shows a compositional bias: basic and acidic residues; sequence SQRETSSPRDSPK.

In terms of assembly, binds DNA as a monomer. As to expression, expressed in the axial mesoderm, notably, in the notochordal precursor cells immediately before formation of the notochord and in the chordoneural hinge of the tail bud, after the notochord is formed. In addition, its expression is detected in the ventral forebrain, sensory neurons, fin buds and excretory system.

The protein localises to the nucleus. Transcription factor which acts as a transcriptional repressor. May also function as a transcriptional activator. Binds to the palindromic T site 5'-TTCACACCTAGGTGTGAA-3' DNA sequence, or a half-site, which are present in the regulatory region of several genes. Involved in the transcriptional regulation of genes required for mesoderm differentiation. Plays a role in the specification of late notochordal precursor cells and formation of the differentiated notochord. Required for cardiac atrioventricular canal formation. The sequence is that of T-box transcription factor TBX2b (tbx2b) from Danio rerio (Zebrafish).